Reading from the N-terminus, the 1191-residue chain is DNA topoisomerase 2 (1191 aa).

ATP is bound by residues Asn64, Asn95, and 142–149 (GTNGVGLK). Mg(2+) contacts are provided by Glu437, Asp538, and Asp540. The region spanning 706–1173 (IPNFLDGMTR…PGASVWLEEI (468 aa)) is the Topo IIA-type catalytic domain. Tyr799 functions as the O-(5'-phospho-DNA)-tyrosine intermediate in the catalytic mechanism.

It belongs to the type II topoisomerase family. Mg(2+) is required as a cofactor. Mn(2+) serves as cofactor. Requires Ca(2+) as cofactor.

The protein localises to the host cytoplasm. The catalysed reaction is ATP-dependent breakage, passage and rejoining of double-stranded DNA.. Its function is as follows. Type II topoisomerase. Processively relaxes supercoiled DNA. Displays DNA-supercoiling activity only when associated with the viral histone-like protein. The polypeptide is DNA topoisomerase 2 (Ornithodoros (relapsing fever ticks)).